A 332-amino-acid polypeptide reads, in one-letter code: ADP-L-glycero-D-manno-heptose-6-epimerase (332 aa).

Residues 10–11 (FI), 31–32 (DD), lysine 38, 74–78 (QGACS), and asparagine 91 each bind NADP(+). The active-site Proton acceptor is tyrosine 138. Lysine 142 lines the NADP(+) pocket. Asparagine 167 is a binding site for substrate. NADP(+)-binding residues include valine 168 and lysine 176. The Proton acceptor role is filled by lysine 176. Substrate contacts are provided by residues arginine 178, histidine 185, 199 to 202 (FSGW), arginine 212, and tyrosine 291.

Belongs to the NAD(P)-dependent epimerase/dehydratase family. HldD subfamily. In terms of assembly, homopentamer. Requires NADP(+) as cofactor.

It catalyses the reaction ADP-D-glycero-beta-D-manno-heptose = ADP-L-glycero-beta-D-manno-heptose. The protein operates within nucleotide-sugar biosynthesis; ADP-L-glycero-beta-D-manno-heptose biosynthesis; ADP-L-glycero-beta-D-manno-heptose from D-glycero-beta-D-manno-heptose 7-phosphate: step 4/4. Catalyzes the interconversion between ADP-D-glycero-beta-D-manno-heptose and ADP-L-glycero-beta-D-manno-heptose via an epimerization at carbon 6 of the heptose. This Bordetella avium (strain 197N) protein is ADP-L-glycero-D-manno-heptose-6-epimerase.